A 187-amino-acid polypeptide reads, in one-letter code: Accessory gene regulator protein B (187 aa).

5 consecutive transmembrane segments (helical) span residues 49-69 (LAYILNIFIFTLITNISFYLI), 82-102 (FWCYIESITLFIVLPLLVLHF), 107-127 (TLMMFLALLSVGVVIKYAPAA), 143-163 (YFSIIISTILFIITLFVKEPY), and 164-184 (TQFIQLGIIIQAITLLPIYYS).

It belongs to the AgrB family.

It is found in the cell membrane. Functionally, essential for the production of a quorum sensing system signal molecule, the autoinducing peptide (AIP). This quorum sensing system is responsible for the regulation of the expression of virulence factor genes. Involved in the proteolytic processing of AgrD, the precursor of AIP. In Staphylococcus aureus (strain MRSA252), this protein is Accessory gene regulator protein B.